We begin with the raw amino-acid sequence, 89 residues long: Small ribosomal subunit protein uS15 (89 aa).

This sequence belongs to the universal ribosomal protein uS15 family. Part of the 30S ribosomal subunit. Forms a bridge to the 50S subunit in the 70S ribosome, contacting the 23S rRNA.

In terms of biological role, one of the primary rRNA binding proteins, it binds directly to 16S rRNA where it helps nucleate assembly of the platform of the 30S subunit by binding and bridging several RNA helices of the 16S rRNA. Its function is as follows. Forms an intersubunit bridge (bridge B4) with the 23S rRNA of the 50S subunit in the ribosome. The sequence is that of Small ribosomal subunit protein uS15 from Beijerinckia indica subsp. indica (strain ATCC 9039 / DSM 1715 / NCIMB 8712).